Reading from the N-terminus, the 736-residue chain is 3',5'-cyclic-AMP phosphodiesterase 4B (736 aa).

Disordered stretches follow at residues 51–78 (QLPP…TTLP), 189–209 (LHGT…SRVN), and 282–301 (KQND…KKKK). A Phosphoserine modification is found at serine 290. The PDEase domain maps to 330–659 (VNTENEDHLA…NWYQSMIPQS (330 aa)). The active-site Proton donor is histidine 406. Residue histidine 406 participates in 3',5'-cyclic AMP binding. Positions 406 and 410 each coordinate AMP. Zn(2+)-binding residues include histidine 410, histidine 446, aspartate 447, and aspartate 564. Residues aspartate 447, aspartate 564, glutamine 615, and phenylalanine 618 each coordinate AMP. Aspartate 447 is a binding site for Mg(2+). Aspartate 447 is a binding site for Mn(2+). 2 residues coordinate 3',5'-cyclic AMP: glutamine 615 and phenylalanine 618. Phosphoserine is present on residues serine 659 and serine 661. A disordered region spans residues 685-736 (DEEDSEGPEKEGEGHSYFSSTKTLCVIDPENRDSLGETDIDIATEDKSPVDT).

Belongs to the cyclic nucleotide phosphodiesterase family. PDE4 subfamily. In terms of assembly, interacts with DISC1. The cofactor is Zn(2+). Mg(2+) is required as a cofactor. Requires Mn(2+) as cofactor. Expressed in brain, heart, lung and skeletal muscle. Expressed in white blood cells. As to expression, brain-specific isoform.

It localises to the cytoplasm. Its subcellular location is the cell membrane. It catalyses the reaction 3',5'-cyclic AMP + H2O = AMP + H(+). The protein operates within purine metabolism; 3',5'-cyclic AMP degradation; AMP from 3',5'-cyclic AMP: step 1/1. Its activity is regulated as follows. Inhibited by rolipram. In terms of biological role, hydrolyzes the second messenger cAMP, which is a key regulator of many important physiological processes. May be involved in mediating central nervous system effects of therapeutic agents ranging from antidepressants to antiasthmatic and anti-inflammatory agents. This Homo sapiens (Human) protein is 3',5'-cyclic-AMP phosphodiesterase 4B.